The following is a 513-amino-acid chain: Interferon alpha/beta receptor 2 (513 aa).

The N-terminal stretch at methionine 1 to alanine 21 is a signal peptide. Residues serine 22 to alanine 242 are Extracellular-facing. 2 cysteine pairs are disulfide-bonded: cysteine 39–cysteine 123 and cysteine 85–cysteine 93. Asparagine 42, asparagine 58, asparagine 65, asparagine 78, and asparagine 84 each carry an N-linked (GlcNAc...) asparagine glycan. N-linked (GlcNAc...) asparagine glycans are attached at residues asparagine 149, asparagine 191, and asparagine 195. Residues cysteine 210 and cysteine 227 are joined by a disulfide bond. The chain crosses the membrane as a helical span at residues isoleucine 243–leucine 263. At lysine 264 to arginine 513 the chain is on the cytoplasmic side. Positions glycine 334 to lysine 402 are disordered. A Phosphotyrosine modification is found at tyrosine 335. Residues proline 344 to serine 354 show a composition bias toward polar residues. The span at glycine 377–glycine 389 shows a compositional bias: low complexity. At serine 403 the chain carries Phosphoserine. The tract at residues glycine 421–serine 444 is mediates interaction with STAT2 (and required for the recruitment of USP18). A phosphoserine mark is found at serine 448 and serine 465. A disordered region spans residues glutamate 458 to arginine 513. Residue tyrosine 510 is modified to Phosphotyrosine.

This sequence belongs to the type II cytokine receptor family. Heterodimer with IFNAR1; forming the receptor for type I interferon. Interacts with the transcriptional factors STAT1 and STAT2. Interacts with JAK1. Interacts with USP18; indirectly via STAT2, it negatively regulates the assembly of the ternary interferon-IFNAR1-IFNAR2 complex and therefore type I interferon signaling. Phosphorylated on tyrosine residues upon interferon binding. Phosphorylation at Tyr-335 or Tyr-510 are sufficient to mediate interferon dependent activation of STAT1, STAT2 and STAT3 leading to antiproliferative effects on many different cell types. As to expression, widely expressed. Detected in liver, testis, kidney, salivary gland, thymus, brain, lung and placenta. Isoform 1, isoform 2 and isoform 3 are expressed in brain.

It localises to the cell membrane. The protein resides in the secreted. In terms of biological role, together with IFNAR1, forms the heterodimeric receptor for type I interferons (including interferons alpha, beta, epsilon, omega and kappa). Type I interferon binding activates the JAK-STAT signaling cascade, resulting in transcriptional activation or repression of interferon-regulated genes that encode the effectors of the interferon response. Mechanistically, type I interferon-binding brings the IFNAR1 and IFNAR2 subunits into close proximity with one another, driving their associated Janus kinases (JAKs) (TYK2 bound to IFNAR1 and JAK1 bound to IFNAR2) to cross-phosphorylate one another. The activated kinases phosphorylate specific tyrosine residues on the intracellular domains of IFNAR1 and IFNAR2, forming docking sites for the STAT transcription factors (STAT1, STAT2 and STAT). STAT proteins are then phosphorylated by the JAKs, promoting their translocation into the nucleus to regulate expression of interferon-regulated genes. Its function is as follows. May be potent inhibitors of type I IFN receptor activity. The polypeptide is Interferon alpha/beta receptor 2 (Ifnar2) (Mus musculus (Mouse)).